The primary structure comprises 571 residues: Proline--tRNA ligase (571 aa).

It belongs to the class-II aminoacyl-tRNA synthetase family. ProS type 1 subfamily. In terms of assembly, homodimer.

The protein resides in the cytoplasm. The enzyme catalyses tRNA(Pro) + L-proline + ATP = L-prolyl-tRNA(Pro) + AMP + diphosphate. Its function is as follows. Catalyzes the attachment of proline to tRNA(Pro) in a two-step reaction: proline is first activated by ATP to form Pro-AMP and then transferred to the acceptor end of tRNA(Pro). As ProRS can inadvertently accommodate and process non-cognate amino acids such as alanine and cysteine, to avoid such errors it has two additional distinct editing activities against alanine. One activity is designated as 'pretransfer' editing and involves the tRNA(Pro)-independent hydrolysis of activated Ala-AMP. The other activity is designated 'posttransfer' editing and involves deacylation of mischarged Ala-tRNA(Pro). The misacylated Cys-tRNA(Pro) is not edited by ProRS. In Pseudomonas putida (strain ATCC 700007 / DSM 6899 / JCM 31910 / BCRC 17059 / LMG 24140 / F1), this protein is Proline--tRNA ligase.